We begin with the raw amino-acid sequence, 693 residues long: Translation initiation factor IF-2 (693 aa).

In terms of domain architecture, tr-type G spans 181–349 (PRPPVVTVMG…MILLVAEMNE (169 aa)). The segment at 190–197 (GHVDHGKT) is G1. Residue 190-197 (GHVDHGKT) participates in GTP binding. The tract at residues 215 to 219 (GITQS) is G2. The segment at 236-239 (DTPG) is G3. GTP contacts are provided by residues 236 to 240 (DTPGH) and 290 to 293 (NKID). The tract at residues 290 to 293 (NKID) is G4. A G5 region spans residues 327-329 (SAR).

The protein belongs to the TRAFAC class translation factor GTPase superfamily. Classic translation factor GTPase family. IF-2 subfamily.

It localises to the cytoplasm. Functionally, one of the essential components for the initiation of protein synthesis. Protects formylmethionyl-tRNA from spontaneous hydrolysis and promotes its binding to the 30S ribosomal subunits. Also involved in the hydrolysis of GTP during the formation of the 70S ribosomal complex. The protein is Translation initiation factor IF-2 of Thermotoga petrophila (strain ATCC BAA-488 / DSM 13995 / JCM 10881 / RKU-1).